The primary structure comprises 356 residues: Golgi-resident adenosine 3',5'-bisphosphate 3'-phosphatase (356 aa).

An N-acetylmethionine modification is found at Met1. The Cytoplasmic segment spans residues 1–12 (MAPMGIRLSPLG). The chain crosses the membrane as a helical span at residues 13 to 33 (VAVFFLLGLGVLYHLYSGFLA). Residues 34–356 (GRFSLFGLGG…KLPDLEKSGH (323 aa)) lie on the Lumenal side of the membrane. A disordered region spans residues 82 to 104 (VRESNVLHEKSKGKTREGAEDKM). Asp108 functions as the Proton acceptor in the catalytic mechanism. Residues Glu131, Asp172, Leu174, and Asp175 each coordinate Mg(2+). Thr177 (proton acceptor) is an active-site residue. Residues Ser240 and His243 each coordinate AMP. Asn257 carries an N-linked (GlcNAc...) asparagine glycan. Gly266 and Lys270 together coordinate AMP. Asp298 provides a ligand contact to Mg(2+).

Belongs to the inositol monophosphatase superfamily. Requires Mg(2+) as cofactor. Contains N-linked glycan resistant to endoglycosydase H.

It is found in the golgi apparatus. The protein resides in the trans-Golgi network membrane. It catalyses the reaction adenosine 3',5'-bisphosphate + H2O = AMP + phosphate. It participates in sulfur metabolism. With respect to regulation, strongly inhibited by lithium. Functionally, exhibits 3'-nucleotidase activity toward adenosine 3',5'-bisphosphate (PAP), namely hydrolyzes adenosine 3',5'-bisphosphate into adenosine 5'-monophosphate (AMP) and a phosphate. May play a role in the formation of skeletal elements derived through endochondral ossification, possibly by clearing adenosine 3',5'-bisphosphate produced by Golgi sulfotransferases during glycosaminoglycan sulfation. Has no activity toward 3'-phosphoadenosine 5'-phosphosulfate (PAPS) or inositol phosphate (IP) substrates including I(1)P, I(1,4)P2, I(1,3,4)P3, I(1,4,5)P3 and I(1,3,4,5)P4. The protein is Golgi-resident adenosine 3',5'-bisphosphate 3'-phosphatase (Bpnt2) of Rattus norvegicus (Rat).